The sequence spans 354 residues: Probable L-ascorbate-6-phosphate lactonase UlaG (354 aa).

The protein belongs to the UlaG family. A divalent metal cation serves as cofactor.

It is found in the cytoplasm. It carries out the reaction L-ascorbate 6-phosphate + H2O = 3-dehydro-L-gulonate 6-phosphate. It functions in the pathway cofactor degradation; L-ascorbate degradation; D-xylulose 5-phosphate from L-ascorbate: step 1/4. Functionally, probably catalyzes the hydrolysis of L-ascorbate-6-P into 3-keto-L-gulonate-6-P. Is essential for L-ascorbate utilization under anaerobic conditions. The polypeptide is Probable L-ascorbate-6-phosphate lactonase UlaG (Shigella dysenteriae serotype 1 (strain Sd197)).